Here is a 348-residue protein sequence, read N- to C-terminus: NADH-ubiquinone oxidoreductase chain 2 (348 aa).

Helical transmembrane passes span 1–21 (MMTL…MFSS), 23–43 (WFFA…MMLF), 56–76 (YFIS…WNYF), 92–112 (ITLI…HFWL), 123–143 (MGLI…IQVS), 148–168 (NMYI…FGGL), 176–196 (LLAY…AVSA), 198–218 (LSWV…TILI), 242–262 (CILV…FLKL), 272–292 (SLIL…FFYL), and 321–341 (LLFN…PFMI).

It belongs to the complex I subunit 2 family.

It is found in the mitochondrion inner membrane. The enzyme catalyses a ubiquinone + NADH + 5 H(+)(in) = a ubiquinol + NAD(+) + 4 H(+)(out). In terms of biological role, core subunit of the mitochondrial membrane respiratory chain NADH dehydrogenase (Complex I) that is believed to belong to the minimal assembly required for catalysis. Complex I functions in the transfer of electrons from NADH to the respiratory chain. The immediate electron acceptor for the enzyme is believed to be ubiquinone. This chain is NADH-ubiquinone oxidoreductase chain 2 (MT-ND2), found in Myxine glutinosa (Atlantic hagfish).